The sequence spans 124 residues: Fluoride-specific ion channel FluC (124 aa).

4 helical membrane-spanning segments follow: residues 1 to 21 (MIGVTLAVAVGGALGCLLRFA), 34 to 54 (FYAATLAVNIAGCLLIGYLYG), 62 to 82 (VPLALRAGLIAGFLGGLTTFS), and 101 to 121 (FSYLAFSVLGGLLATWAGLIL). Residues glycine 76 and threonine 79 each coordinate Na(+).

It belongs to the fluoride channel Fluc/FEX (TC 1.A.43) family.

It is found in the cell inner membrane. It catalyses the reaction fluoride(in) = fluoride(out). Na(+) is not transported, but it plays an essential structural role and its presence is essential for fluoride channel function. Fluoride-specific ion channel. Important for reducing fluoride concentration in the cell, thus reducing its toxicity. The polypeptide is Fluoride-specific ion channel FluC (Azotobacter vinelandii (strain DJ / ATCC BAA-1303)).